The sequence spans 313 residues: Homoserine O-succinyltransferase (313 aa).

The Acyl-thioester intermediate role is filled by C142. Positions 163 and 192 each coordinate substrate. The active-site Proton acceptor is H235. The active site involves E237. Position 249 (R249) interacts with substrate.

Belongs to the MetA family.

It is found in the cytoplasm. The catalysed reaction is L-homoserine + succinyl-CoA = O-succinyl-L-homoserine + CoA. Its pathway is amino-acid biosynthesis; L-methionine biosynthesis via de novo pathway; O-succinyl-L-homoserine from L-homoserine: step 1/1. Transfers a succinyl group from succinyl-CoA to L-homoserine, forming succinyl-L-homoserine. This chain is Homoserine O-succinyltransferase, found in Vibrio atlanticus (strain LGP32) (Vibrio splendidus (strain Mel32)).